The following is a 248-amino-acid chain: MAGHSQFKNIMYRKGAQDKKRSKLFAKLAKEITVAAKMGLPDPEYNPRLRAAIQAARVENMPKDNIERAIKKSSDQGGENYEEVRYEGFGPGGIGVIVETLTDNRNRTAGEVRSIFTKNGGNLGETGAVSFMFDRLGLIEYPADAASADDMIEAAIEAGADDCQSGEAGHELYCAPDALHEVAQGLESKFGEARAARIVWKPQNTIALEDEKAETVLKMLEALDDNDDVQQVYANFEMSDSLMEKMSA.

It belongs to the TACO1 family.

Its subcellular location is the cytoplasm. In Parvibaculum lavamentivorans (strain DS-1 / DSM 13023 / NCIMB 13966), this protein is Probable transcriptional regulatory protein Plav_2114.